The sequence spans 756 residues: MTISPPEREKKVRVVVDNDPVPTSFERWAKPGHFDRTLARGPQTTTWIWNLHALAHDFDTHTDSSLEDVSRKIFSAHFGHLAVIFVWLSGMYFHGAKFSNYSAWLADPTRVKPSAQVVWPIVGQGILNGDVGGGFHGIQITSGLFQLWRASGITNEFQLYVTAIGGLVMAGLMLFAGWFHYHKRAPKLEWFQNVESMMNHHLAGLLGLGSLGWAGHQIHVSLPINKLLDAGVAAKDIPLPHEFILNPTLMSELYPKVEWGVMKGVIPFFTLNWGAYSDFLTFKGGLNPVTGGLWLSDTAHHHLAIAVLFIIAGHMYRTNWGIGHSMKEILEAHKGPFTGEGHKGLYETLTTSWHAQLAINLAMMGSLSIIVAHHMYSMPPYPYLATDYPTQLSLFTHHMWIGGFLIVGGAAHGAIYMVRDYDPVVNQNNLLDRVIRHRDAIISHLNWVCIFLGFHSFGLYIHNDTMRAFGRPQDMFSDTAIQLQPVFAQWVQNLHTLAPGGTAPNALEPVSYAFGGGVVAVGGKVAMMPIALGTADFLVHHIHAFTIHVTVLILLKGVLFARSSRLIPDKANLGFRFPCDGPGRGGTCQVSGWDHVFLGLFWMYNSLSIVIFHFSWKMQSDVWGTVAPDGTVTHITGGNFAQSALTINGWLRDFLWAQAAQVIGSYGSALSAYGLLFLGAHFVWAFSLMFLFSGRGYWQELIESIVWAHNKLKVAPSIQPRALSIIQGRAVGVAHYLLGGIATTWAFFLARIIAVG.

8 helical membrane passes run isoleucine 73–alanine 96, leucine 159–histidine 182, methionine 198–leucine 222, threonine 298–tyrosine 316, tryptophan 353–tyrosine 376, leucine 392–valine 418, alanine 440–histidine 462, and phenylalanine 537–leucine 555. The [4Fe-4S] cluster site is built by cysteine 579 and cysteine 588. The next 2 helical transmembrane spans lie at histidine 595–tryptophan 616 and leucine 670–phenylalanine 692. Histidine 681 is a binding site for chlorophyll a'. 2 residues coordinate chlorophyll a: methionine 689 and tyrosine 697. A phylloquinone-binding site is contributed by tryptophan 698. The helical transmembrane segment at alanine 730–alanine 750 threads the bilayer.

The protein belongs to the PsaA/PsaB family. In terms of assembly, the PsaA/B heterodimer binds the P700 chlorophyll special pair and subsequent electron acceptors. PSI consists of a core antenna complex that captures photons, and an electron transfer chain that converts photonic excitation into a charge separation. The cyanobacterial PSI reaction center is composed of one copy each of PsaA,B,C,D,E,F,I,J,K,L,M and X, and forms trimeric complexes. Requires PSI electron transfer chain: 5 chlorophyll a, 1 chlorophyll a', 2 phylloquinones and 3 4Fe-4S clusters. PSI core antenna: 90 chlorophyll a, 22 carotenoids, 3 phospholipids and 1 galactolipid. P700 is a chlorophyll a/chlorophyll a' dimer, A0 is one or more chlorophyll a, A1 is one or both phylloquinones and FX is a shared 4Fe-4S iron-sulfur center. as cofactor.

It is found in the cellular thylakoid membrane. It catalyses the reaction reduced [plastocyanin] + hnu + oxidized [2Fe-2S]-[ferredoxin] = oxidized [plastocyanin] + reduced [2Fe-2S]-[ferredoxin]. In terms of biological role, psaA and PsaB bind P700, the primary electron donor of photosystem I (PSI), as well as the electron acceptors A0, A1 and FX. PSI is a plastocyanin/cytochrome c6-ferredoxin oxidoreductase, converting photonic excitation into a charge separation, which transfers an electron from the donor P700 chlorophyll pair to the spectroscopically characterized acceptors A0, A1, FX, FA and FB in turn. Oxidized P700 is reduced on the lumenal side of the thylakoid membrane by plastocyanin or cytochrome c6. The sequence is that of Photosystem I P700 chlorophyll a apoprotein A1 from Cyanothece sp. (strain PCC 7425 / ATCC 29141).